A 589-amino-acid chain; its full sequence is Phenylalanine--tRNA ligase beta subunit (589 aa).

A B5 domain is found at 302–379 (LPYRKEMVRA…IAYGYNNIQM (78 aa)). Residues Asp-357, Asp-363, Glu-366, and Asp-367 each contribute to the Mg(2+) site.

It belongs to the phenylalanyl-tRNA synthetase beta subunit family. Type 2 subfamily. As to quaternary structure, heterotetramer; dimer of two heterodimers formed by FARSA and FARSB. Requires Mg(2+) as cofactor.

Its subcellular location is the cytoplasm. It carries out the reaction tRNA(Phe) + L-phenylalanine + ATP = L-phenylalanyl-tRNA(Phe) + AMP + diphosphate + H(+). The polypeptide is Phenylalanine--tRNA ligase beta subunit (Farsb) (Mus musculus (Mouse)).